The following is a 445-amino-acid chain: Putative H/ACA ribonucleoprotein complex subunit 4 (445 aa).

Positions 1-32 (MGKKDKRSKLEGDELAEAQQKGSFQLPSSNET) are disordered. A compositionally biased stretch (polar residues) spans 20-32 (QKGSFQLPSSNET). Aspartate 113 functions as the Nucleophile in the catalytic mechanism. The 76-residue stretch at 284-359 (HKRVVVKDSC…IVAKSKRVIM (76 aa)) folds into the PUA domain. A disordered region spans residues 407–445 (TDKVKKEQEDKEDEEEEEAPKKKSKKAAKKEVSSSSDSE).

This sequence belongs to the pseudouridine synthase TruB family. In terms of assembly, component of the small nucleolar ribonucleoprotein particle containing H/ACA-type snoRNAs (H/ACA snoRNPs).

The protein resides in the nucleus. It localises to the nucleolus. It catalyses the reaction a uridine in RNA = a pseudouridine in RNA. Functionally, plays a central role in ribosomal RNA processing. Probable catalytic subunit of H/ACA small nucleolar ribonucleoprotein (H/ACA snoRNP) complex, which catalyzes pseudouridylation of rRNA. This involves the isomerization of uridine such that the ribose is subsequently attached to C5, instead of the normal N1. Pseudouridine ('psi') residues may serve to stabilize the conformation of rRNAs. This Caenorhabditis briggsae protein is Putative H/ACA ribonucleoprotein complex subunit 4.